The chain runs to 141 residues: ATP synthase epsilon chain (141 aa).

The protein belongs to the ATPase epsilon chain family. As to quaternary structure, F-type ATPases have 2 components, CF(1) - the catalytic core - and CF(0) - the membrane proton channel. CF(1) has five subunits: alpha(3), beta(3), gamma(1), delta(1), epsilon(1). CF(0) has three main subunits: a, b and c.

It localises to the cell inner membrane. Produces ATP from ADP in the presence of a proton gradient across the membrane. The polypeptide is ATP synthase epsilon chain (Bordetella avium (strain 197N)).